The primary structure comprises 211 residues: Cell division protein SepF (211 aa).

Over residues Asp15–Val26 the composition is skewed to acidic residues. Residues Asp15–Gln111 form a disordered region. 3 stretches are compositionally biased toward polar residues: residues Ile44–Ala57, Ala64–Gln81, and Arg91–Gln111.

This sequence belongs to the SepF family. As to quaternary structure, homodimer. Interacts with FtsZ.

Its subcellular location is the cytoplasm. Cell division protein that is part of the divisome complex and is recruited early to the Z-ring. Probably stimulates Z-ring formation, perhaps through the cross-linking of FtsZ protofilaments. Its function overlaps with FtsA. The chain is Cell division protein SepF from Streptococcus uberis (strain ATCC BAA-854 / 0140J).